The primary structure comprises 322 residues: Ribosomal RNA small subunit methyltransferase H (322 aa).

S-adenosyl-L-methionine contacts are provided by residues 35–37 (GGY), aspartate 52, phenylalanine 79, aspartate 100, and glutamine 107. The disordered stretch occupies residues 254-322 (GATPAGSRHL…TAPKKEGRQG (69 aa)). Residues 295-309 (SRSATLRVARRTAAA) show a composition bias toward low complexity.

This sequence belongs to the methyltransferase superfamily. RsmH family.

The protein resides in the cytoplasm. It carries out the reaction cytidine(1402) in 16S rRNA + S-adenosyl-L-methionine = N(4)-methylcytidine(1402) in 16S rRNA + S-adenosyl-L-homocysteine + H(+). Its function is as follows. Specifically methylates the N4 position of cytidine in position 1402 (C1402) of 16S rRNA. The chain is Ribosomal RNA small subunit methyltransferase H from Rhizorhabdus wittichii (strain DSM 6014 / CCUG 31198 / JCM 15750 / NBRC 105917 / EY 4224 / RW1) (Sphingomonas wittichii).